Reading from the N-terminus, the 412-residue chain is Serine hydroxymethyltransferase (412 aa).

(6S)-5,6,7,8-tetrahydrofolate is bound by residues Leu-114 and 118–120; that span reads GHL. Lys-223 carries the post-translational modification N6-(pyridoxal phosphate)lysine.

This sequence belongs to the SHMT family. Homodimer. It depends on pyridoxal 5'-phosphate as a cofactor.

The protein resides in the cytoplasm. It catalyses the reaction (6R)-5,10-methylene-5,6,7,8-tetrahydrofolate + glycine + H2O = (6S)-5,6,7,8-tetrahydrofolate + L-serine. Its pathway is one-carbon metabolism; tetrahydrofolate interconversion. The protein operates within amino-acid biosynthesis; glycine biosynthesis; glycine from L-serine: step 1/1. In terms of biological role, catalyzes the reversible interconversion of serine and glycine with tetrahydrofolate (THF) serving as the one-carbon carrier. This reaction serves as the major source of one-carbon groups required for the biosynthesis of purines, thymidylate, methionine, and other important biomolecules. Also exhibits THF-independent aldolase activity toward beta-hydroxyamino acids, producing glycine and aldehydes, via a retro-aldol mechanism. The protein is Serine hydroxymethyltransferase of Mesoplasma florum (strain ATCC 33453 / NBRC 100688 / NCTC 11704 / L1) (Acholeplasma florum).